We begin with the raw amino-acid sequence, 338 residues long: MKRMIALDGAQGEGGGQILRSALSLSMITGQPFTITDIRAGRAKPGLLRQHLTAVKAATEICRATVEGAELRAQRLIFRPGTVRGGDYRFAIGSAGSSTLVLQTVLPALWFADGPSRVEVSGGTDNPSAPPADFIRRVLEPLLAKMGIHQQTTLLRHGFYPAGGGVVATEVSPVALFNTLQLGERGNIVQMRGEVLLAGVPRHVAEREIATLAGSFSLHEQNIHNLPRDQGPGNTVSLEVESENITERFFVVGEKRISAEVVAAQLVKEVKRYLASPAAVGEYLADQLVLPMALAGAGEFTVAHPSCHLLTNIAVVERFLPVRFSLVEADGVTRVSIE.

ATP-binding positions include Q103 and 283 to 287; that span reads YLADQ. H308 acts as the Tele-AMP-histidine intermediate in catalysis.

Belongs to the RNA 3'-terminal cyclase family. Type 1 subfamily.

The protein resides in the cytoplasm. The enzyme catalyses a 3'-end 3'-phospho-ribonucleotide-RNA + ATP = a 3'-end 2',3'-cyclophospho-ribonucleotide-RNA + AMP + diphosphate. In terms of biological role, catalyzes the conversion of 3'-phosphate to a 2',3'-cyclic phosphodiester at the end of RNA. The mechanism of action of the enzyme occurs in 3 steps: (A) adenylation of the enzyme by ATP; (B) transfer of adenylate to an RNA-N3'P to produce RNA-N3'PP5'A; (C) and attack of the adjacent 2'-hydroxyl on the 3'-phosphorus in the diester linkage to produce the cyclic end product. The biological role of this enzyme is unknown but it is likely to function in some aspects of cellular RNA processing. The polypeptide is RNA 3'-terminal phosphate cyclase (Escherichia coli O17:K52:H18 (strain UMN026 / ExPEC)).